Here is a 365-residue protein sequence, read N- to C-terminus: tRNA N6-adenosine threonylcarbamoyltransferase (365 aa).

Histidine 119 and histidine 123 together coordinate Fe cation. Residues 141–145 (LVSGG), aspartate 174, glycine 187, and asparagine 289 each bind substrate. Aspartate 317 contacts Fe cation. A disordered region spans residues 342–365 (ARPRWPLDSKSPAMLGSGKKGAKA).

It belongs to the KAE1 / TsaD family. Fe(2+) is required as a cofactor.

The protein localises to the cytoplasm. The enzyme catalyses L-threonylcarbamoyladenylate + adenosine(37) in tRNA = N(6)-L-threonylcarbamoyladenosine(37) in tRNA + AMP + H(+). In terms of biological role, required for the formation of a threonylcarbamoyl group on adenosine at position 37 (t(6)A37) in tRNAs that read codons beginning with adenine. Is involved in the transfer of the threonylcarbamoyl moiety of threonylcarbamoyl-AMP (TC-AMP) to the N6 group of A37, together with TsaE and TsaB. TsaD likely plays a direct catalytic role in this reaction. The protein is tRNA N6-adenosine threonylcarbamoyltransferase of Roseobacter denitrificans (strain ATCC 33942 / OCh 114) (Erythrobacter sp. (strain OCh 114)).